The chain runs to 542 residues: MGWWGWAAAAAAAAAWVAVKVLEVLWWRPRRVEEHFARQGITGPRYRFLVGCVREMVALMVAASAKPMPPPYRSHNVLPRVLAFYHHWKKIYGSTFLIWFGPTPRLAIADPELIREVLLARADRFDRYESHPMVRQLEGEGLVSLRGDKWAHHRRVLTPAFHMDNLRLLLPCVGMTVLDMADKWRAMAEADKSGEVEIDVSDWFQVVTEDAITRTAFGRSYEDGKVVFKLQAQLMAFASEAFRKVFIPGYRFLPTKKNTSSWKLDKEIRKNLVTLIGRRQEAGDDEKLDGCAKDLLGLMINAAASSNGGKRSALPVSPITVNDIVEECKTFFFAGKQTTSNLLTWAIVVLAMHPEWQERARQEVLDVCGADGVPSREQLAKLKTLGMILNETLRLYPPAVATVRRAKADVELGGYLRIPRDTELLIPIMAVHHDARLWGPDAAQFNPARFAGGVARAARHPAAFIPFGLGARMCIGQNLAILEAKLTVAVILHRFEFRLSARYVHAPTVLMLLHPQYGAPIVFRPRSSSQPTCEKMNPLTSS.

A helical transmembrane segment spans residues 2 to 22; sequence GWWGWAAAAAAAAAWVAVKVL. Cys474 is a binding site for heme.

This sequence belongs to the cytochrome P450 family. Heme serves as cofactor. Highly expressed in leaf sheaths. Expressed in roots, shoot apex, leaf blades, internodes and panicles.

It localises to the membrane. In terms of biological role, cytochrome P450 involved in brassinosteroids (BRs) inactivation and regulation of BRs homeostasis. Is a multifunctional and multisubstrate enzyme that controls the endogenous bioactive BR content both by direct inactivation of castasterone (CS) and by decreasing the levels of BR precursors. Catalyzes the oxidation of carbon 22 hydroxylated BR intermediates to produce C26 oxidized metabolites. This chain is Cytochrome P450 734A6 (CYP734A6), found in Oryza sativa subsp. japonica (Rice).